The following is a 92-amino-acid chain: Large ribosomal subunit protein eL31 (92 aa).

This sequence belongs to the eukaryotic ribosomal protein eL31 family.

In Halorubrum lacusprofundi (strain ATCC 49239 / DSM 5036 / JCM 8891 / ACAM 34), this protein is Large ribosomal subunit protein eL31.